The primary structure comprises 383 residues: Cobalt-precorrin-5B C(1)-methyltransferase (383 aa).

The protein belongs to the CbiD family.

It carries out the reaction Co-precorrin-5B + S-adenosyl-L-methionine = Co-precorrin-6A + S-adenosyl-L-homocysteine. The protein operates within cofactor biosynthesis; adenosylcobalamin biosynthesis; cob(II)yrinate a,c-diamide from sirohydrochlorin (anaerobic route): step 6/10. In terms of biological role, catalyzes the methylation of C-1 in cobalt-precorrin-5B to form cobalt-precorrin-6A. The chain is Cobalt-precorrin-5B C(1)-methyltransferase from Prochlorococcus marinus (strain MIT 9313).